A 571-amino-acid polypeptide reads, in one-letter code: DM7 family protein CG15332 (571 aa).

The tract at residues 440-472 (TRDDGINTADYQSQFPELEPEPEPEPEDEGEDV) is disordered. A compositionally biased stretch (acidic residues) spans 457-471 (LEPEPEPEPEDEGED).

This sequence belongs to the DM7 family.

This is DM7 family protein CG15332 from Drosophila melanogaster (Fruit fly).